The primary structure comprises 282 residues: 4-diphosphocytidyl-2-C-methyl-D-erythritol kinase (282 aa).

Residue lysine 12 is part of the active site. ATP is bound at residue 95–105 (PMGGGIGGGSS). The active site involves aspartate 137.

This sequence belongs to the GHMP kinase family. IspE subfamily.

The catalysed reaction is 4-CDP-2-C-methyl-D-erythritol + ATP = 4-CDP-2-C-methyl-D-erythritol 2-phosphate + ADP + H(+). Its pathway is isoprenoid biosynthesis; isopentenyl diphosphate biosynthesis via DXP pathway; isopentenyl diphosphate from 1-deoxy-D-xylulose 5-phosphate: step 3/6. Functionally, catalyzes the phosphorylation of the position 2 hydroxy group of 4-diphosphocytidyl-2C-methyl-D-erythritol. This is 4-diphosphocytidyl-2-C-methyl-D-erythritol kinase from Pseudomonas aeruginosa (strain UCBPP-PA14).